We begin with the raw amino-acid sequence, 346 residues long: Protein pelota homolog (346 aa).

This sequence belongs to the eukaryotic release factor 1 family. Pelota subfamily. As to quaternary structure, monomer. A divalent metal cation serves as cofactor.

It localises to the cytoplasm. May function in recognizing stalled ribosomes, interact with stem-loop structures in stalled mRNA molecules, and effect endonucleolytic cleavage of the mRNA. May play a role in the release non-functional ribosomes and degradation of damaged mRNAs. Has endoribonuclease activity. This is Protein pelota homolog from Ignicoccus hospitalis (strain KIN4/I / DSM 18386 / JCM 14125).